Consider the following 475-residue polypeptide: Splicing factor U2AF 65 kDa subunit (475 aa).

Residues Met1–Lys90 are disordered. Ser2 is subject to N-acetylserine. Ser2 is subject to Phosphoserine. Residues Ser2 to Asp93 are required for interaction with PRPF19. Residues Phe7–Asn22 show a composition bias toward basic and acidic residues. Residue Lys15 is modified to 5-hydroxylysine; by JMJD6; alternate. Lys15 participates in a covalent cross-link: Glycyl lysine isopeptide (Lys-Gly) (interchain with G-Cter in SUMO2); alternate. Residues Glu17 to Arg47 are necessary and sufficient to stimulate pre-mRNAs 3'-end cleavage in a CFIm complex-dependent manner. Residues Arg23–Arg46 show a composition bias toward basic residues. Positions Arg47–Arg56 are enriched in basic and acidic residues. Lys70 is covalently cross-linked (Glycyl lysine isopeptide (Lys-Gly) (interchain with G-Cter in SUMO2); alternate). N6-acetyllysine; alternate is present on Lys70. Ser79 is subject to Phosphoserine. A compositionally biased stretch (basic residues) spans Ser79–Arg89. RRM domains lie at Arg149 to Asp231, His259 to Val337, and Leu385 to Pro466. Lys276 carries the post-translational modification 5-hydroxylysine; by JMJD6. At Ser294 the chain carries Phosphoserine.

It belongs to the splicing factor SR family. As to quaternary structure, interacts with U2AF1L4. Heterodimer with U2AF1. Binds unphosphorylated SF1. Interacts with SCAF11 and SNW1. Interacts with ZRSR2/U2AF1-RS2. Interacts with RBM17. Interacts with PRPF19; the interaction is direct. Interacts with POLR2A (via the C-terminal domain); Interacts with PRPF19; the interaction is direct. Interacts with POLR2A (via the C-terminal domain); recruits PRPF19 and the Prp19 complex to the pre-mRNA. Interacts with KHDC4 (Isoform 2). Interacts with ZRSR2. Interacts with the SF3B complex composed of SF3B1, SF3B2, SF3B3, SF3B4, SF3B5, SF3B6 and PHF5A. Interacts (via N-terminus) with CPSF7 (via C-terminus); this interaction stimulates pre-mRNA 3'-end processing by promoting the recruitment of the CFIm complex to cleavage and polyadenylation signals. Interacts with ARGLU1; interaction may be involved in ARGLU1-mediated modulation of alternative splicing. In terms of processing, lysyl-hydroxylation at Lys-15 and Lys-276 affects the mRNA splicing activity of the protein, leading to regulate some, but not all, alternative splicing events.

It localises to the nucleus. Plays a role in pre-mRNA splicing and 3'-end processing. By recruiting PRPF19 and the PRP19C/Prp19 complex/NTC/Nineteen complex to the RNA polymerase II C-terminal domain (CTD), and thereby pre-mRNA, may couple transcription to splicing. Required for the export of mRNA out of the nucleus, even if the mRNA is encoded by an intron-less gene. Positively regulates pre-mRNA 3'-end processing by recruiting the CFIm complex to cleavage and polyadenylation signals. This chain is Splicing factor U2AF 65 kDa subunit (U2af2), found in Mus musculus (Mouse).